The sequence spans 175 residues: Adenylate kinase isoenzyme 6 homolog (175 aa).

5 residues coordinate ATP: G18, G20, K21, T22, and T23. An NMPbind region spans residues 38-61; it reads CIGDVVKENHLHFGFDEKWKTYDV. Positions 113–123 are LID; the sequence is SRGYSLEKIQE. R114 contributes to the ATP binding site.

The protein belongs to the adenylate kinase family. AK6 subfamily. As to quaternary structure, interacts with small ribosomal subunit protein uS11. Not a structural component of 43S pre-ribosomes, but transiently interacts with them by binding to uS11.

Its subcellular location is the cytoplasm. It localises to the nucleus. The catalysed reaction is AMP + ATP = 2 ADP. It carries out the reaction ATP + H2O = ADP + phosphate + H(+). Its function is as follows. Broad-specificity nucleoside monophosphate (NMP) kinase that catalyzes the reversible transfer of the terminal phosphate group between nucleoside triphosphates and monophosphates. Also has ATPase activity. Involved in the late cytoplasmic maturation steps of the 40S ribosomal particles, specifically 18S rRNA maturation. While NMP activity is not required for ribosome maturation, ATPase activity is. Associates transiently with small ribosomal subunit protein uS11. ATP hydrolysis breaks the interaction with uS11. May temporarily remove uS11 from the ribosome to enable a conformational change of the ribosomal RNA that is needed for the final maturation step of the small ribosomal subunit. Its NMP activity may have a role in nuclear energy homeostasis. The chain is Adenylate kinase isoenzyme 6 homolog (fap7) from Schizosaccharomyces pombe (strain 972 / ATCC 24843) (Fission yeast).